The following is a 367-amino-acid chain: Innexin inx2 (367 aa).

The Cytoplasmic segment spans residues 1-22; the sequence is MFDVFGSVKGLLKIDQVCIDNN. A helical membrane pass occupies residues 23 to 43; the sequence is VFRMHYKATVIILIAFSLLVT. At 44-109 the chain is on the extracellular side; it reads SRQYIGDPID…EDEVKYHKYY (66 aa). A helical membrane pass occupies residues 110–130; sequence QWVCFVLFFQAILFYVPRYLW. Residues 130–179 form an interaction with shg region; sequence WKSWEGGRLKMLVMDLNSPIVNDECKNDRKKILVDYFIGNLNRHNFYAFR. Residues 131 to 179 lie on the Cytoplasmic side of the membrane; it reads KSWEGGRLKMLVMDLNSPIVNDECKNDRKKILVDYFIGNLNRHNFYAFR. Residues 180–200 form a helical membrane-spanning segment; sequence FFVCEALNFVNVIGQIYFVDF. Topologically, residues 201 to 266 are extracellular; the sequence is FLDGEFSTYG…VLPLNIVNEK (66 aa). The helical transmembrane segment at 267–287 threads the bilayer; it reads IYVFLWFWFIILSIMSGISLI. Residues 288–367 are Cytoplasmic-facing; sequence YRIAVVAGPK…HSAHKRPFDA (80 aa).

This sequence belongs to the pannexin family. As to quaternary structure, monomer and heterooligomer with ogre or Inx3 (via cytoplasmic C-terminal region). Interacts (via cytoplasmic loop) with shg (via cytoplasmic region). Interacts with arm. In terms of tissue distribution, in ovary, expressed in inner germarial sheath cells, prefollicular cells, follicle cells, nurse cells and oocytes. Expressed in embryonic epithelial cells. Expressed in foregut and hindgut from stage 11-17, segmentally repeated tracheal placodes at stage 14, salivary gland at stage 16 and proventriculus at stage 16-17 (at protein level). During germband extension stage (stage 7), expressed in epidermal epithelial cells. Expressed in cephalic furrow. Repeating epidermal pattern emerges at stage 11, refines to one or two cells at each side of the segment borders by stage 13. Expressed in the imaginal wing disk. In pupae, expressed in the CNS and in primary, secondary and tertiary pigment cells of the retina. Expressed in optic lamina of the adult CNS.

The protein resides in the cell membrane. It is found in the cell junction. The protein localises to the gap junction. Its subcellular location is the cytoplasm. It localises to the apical cell membrane. The protein resides in the apicolateral cell membrane. It is found in the basolateral cell membrane. The protein localises to the lateral cell membrane. In terms of biological role, structural components of the gap junctions. Involved in gap junctional communication between germline and somatic cells which is essential for normal oogenesis. In embryonic epidermis, required for epithelial morphogenesis. Required for keyhole formation during early stages of proventriculus development in response to wg signaling. In follicle cells, promotes the formation of egg chambers in part through regulation of shg and baz at the boundary between germ cells and follicle cells. In inner germarial sheath cells, required for survival of early germ cells and for cyst formation. This is Innexin inx2 (Inx2) from Drosophila melanogaster (Fruit fly).